A 533-amino-acid chain; its full sequence is Apolipoprotein N-acyltransferase (533 aa).

Transmembrane regions (helical) follow at residues 17 to 37 (ALLA…FGFF), 74 to 94 (WLFG…ALLI), 105 to 125 (LAIL…AVLA), 127 to 147 (LLWS…GLLE), 178 to 198 (VIGV…PALL), and 205 to 225 (VPGI…GYYA). The CN hydrolase domain maps to 245 to 495 (VQPAIDQEAK…QGFVDSTLSG (251 aa)). The active-site Proton acceptor is Glu290. Residue Lys354 is part of the active site. Cys407 serves as the catalytic Nucleophile. The helical transmembrane segment at 509 to 529 (YFWLIIGIVGMIAVISRMGFI) threads the bilayer.

The protein belongs to the CN hydrolase family. Apolipoprotein N-acyltransferase subfamily.

It localises to the cell inner membrane. The catalysed reaction is N-terminal S-1,2-diacyl-sn-glyceryl-L-cysteinyl-[lipoprotein] + a glycerophospholipid = N-acyl-S-1,2-diacyl-sn-glyceryl-L-cysteinyl-[lipoprotein] + a 2-acyl-sn-glycero-3-phospholipid + H(+). Its pathway is protein modification; lipoprotein biosynthesis (N-acyl transfer). Functionally, catalyzes the phospholipid dependent N-acylation of the N-terminal cysteine of apolipoprotein, the last step in lipoprotein maturation. The chain is Apolipoprotein N-acyltransferase from Rhizobium rhizogenes (strain K84 / ATCC BAA-868) (Agrobacterium radiobacter).